A 1141-amino-acid polypeptide reads, in one-letter code: Translocase of chloroplast 125, chloroplastic (1141 aa).

2 disordered regions span residues methionine 1–tyrosine 177 and glycine 325–glutamate 431. Composition is skewed to basic and acidic residues over residues arginine 57–glycine 72 and isoleucine 107–leucine 121. Over residues tyrosine 132–glutamate 150 the composition is skewed to acidic residues. Residues serine 151–asparagine 167 are compositionally biased toward low complexity. The segment covering glutamate 328–isoleucine 353 has biased composition (acidic residues). Composition is skewed to low complexity over residues arginine 389–threonine 401 and threonine 408–alanine 429. The AIG1-type G domain occupies aspartate 505–lysine 734. The tract at residues glycine 514 to serine 521 is G1. GTP is bound at residue glycine 517 to alanine 522. Mg(2+) is bound at residue serine 521. Residues serine 541–valine 545 form a G2 region. The G3 stretch occupies residues aspartate 561 to glycine 564. Residues threonine 633–serine 636 form a G4 region. Residues histidine 634 and glutamate 682–asparagine 683 contribute to the GTP site. A G5 region spans residues glutamate 682–histidine 684. Disordered regions lie at residues glutamine 758–proline 795 and isoleucine 832–methionine 871. Acidic residues predominate over residues glutamate 770 to aspartate 789. Residues isoleucine 832–glutamine 841 show a composition bias toward basic residues. The helical transmembrane segment at methionine 1116–glycine 1136 threads the bilayer.

It belongs to the TRAFAC class TrmE-Era-EngA-EngB-Septin-like GTPase superfamily. AIG1/Toc34/Toc159-like paraseptin GTPase family. TOC159 subfamily. In terms of assembly, part of the TOC core complex. Mg(2+) serves as cofactor.

Its subcellular location is the plastid. The protein localises to the chloroplast outer membrane. Functionally, GTPase involved in protein precursor import into chloroplasts. Seems to recognize chloroplast-destined precursor proteins and regulate their presentation to the translocation channel through GTP hydrolysis. Probably specialized in the import of nuclear encoded non-photosynthetic preproteins from the cytoplasm to the chloroplast. This Physcomitrium patens (Spreading-leaved earth moss) protein is Translocase of chloroplast 125, chloroplastic.